Here is a 131-residue protein sequence, read N- to C-terminus: Protein anoxia up-regulated (131 aa).

A compositionally biased stretch (polar residues) spans Met1–Val24. Positions Met1–Gly121 are disordered. 2 stretches are compositionally biased toward low complexity: residues Ser44–Ser53 and Thr98–Gly116.

As to expression, concentrated in lamina neurons, first optic lobe neurons and cortical neurons of central brain.

In terms of biological role, plays an important role in the regulation of tissue responsiveness to oxygen deprivation. This Drosophila melanogaster (Fruit fly) protein is Protein anoxia up-regulated.